The chain runs to 277 residues: Radial spoke head protein 9 homolog (277 aa).

It belongs to the flagellar radial spoke RSP9 family. As to quaternary structure, component of axonemal radial spoke complexes.

It localises to the cytoplasm. The protein resides in the cytoskeleton. The protein localises to the cilium axoneme. Its subcellular location is the flagellum axoneme. It is found in the cell projection. It localises to the kinocilium. Functions as part of axonemal radial spoke complexes that play an important part in the motility of sperm and cilia. Essential for both the radial spoke head assembly and the central pair microtubule stability in ependymal motile cilia. Required for motility of olfactory and neural cilia and for the structural integrity of ciliary axonemes in both 9+0 and 9+2 motile cilia. In Xenopus tropicalis (Western clawed frog), this protein is Radial spoke head protein 9 homolog (rsph9).